Consider the following 125-residue polypeptide: UPF0102 protein Mpop_0474 (125 aa).

This sequence belongs to the UPF0102 family.

This chain is UPF0102 protein Mpop_0474, found in Methylorubrum populi (strain ATCC BAA-705 / NCIMB 13946 / BJ001) (Methylobacterium populi).